Here is a 579-residue protein sequence, read N- to C-terminus: V-type ATP synthase alpha chain (579 aa).

Gly-238–Thr-245 lines the ATP pocket.

This sequence belongs to the ATPase alpha/beta chains family.

It catalyses the reaction ATP + H2O + 4 H(+)(in) = ADP + phosphate + 5 H(+)(out). Its function is as follows. Produces ATP from ADP in the presence of a proton gradient across the membrane. The V-type alpha chain is a catalytic subunit. In Borrelia hermsii (strain HS1 / DAH), this protein is V-type ATP synthase alpha chain.